A 534-amino-acid chain; its full sequence is MKKKIVHPIVLAILDGWGHTNIQQGNAIKIAKTPTIDSLIQAYPSTLLAASGQEVGLPKGQMGNSEVGHTTIGGGRVIQQELVKIGNSIVDNSFFNNLELNEACEYANNNKASLHLIGLCSNGGVHSHIDHLLALIDLADSKQVTNLYLHLITDGRDTSSNSAKYFIKIVADHIEHKQFATISTISGRYYAMDRDFRWSRTQAAYNILTSNNSIKLNASVNYGDLIDHYYNKGISDEFIPPSRINLGSIKDNDAIVFFNFRPDRMRQIVQAFVQKPFNCFATKPLYNLRVVTFTNYDTSLNTTIAFHPHILNNFLGEVLYKYGLKQFRVSETEKYAHVTYFFNGGAEEPFPGEDRELVSSPDVTTYDLSPDMSAELVTQKSISAIKKAIYSCIVINYANADMLGHTGKLKETIQSIETVDRCITELLDAVSKLNGTLIITADHGNAECMFTDEGNPCTAHTTNLVPLILIEGEQEAISGHGGQVKLRNNGSLADIAPTILDILHLKKPPEMTGKSLIINSRYETRNIEKTSIEL.

Positions 15 and 65 each coordinate Mn(2+). The Phosphoserine intermediate role is filled by S65. Residues H126, 156-157 (RD), R188, R194, 261-264 (RPDR), and K334 contribute to the substrate site. 5 residues coordinate Mn(2+): D401, H405, D442, H443, and H460.

Belongs to the BPG-independent phosphoglycerate mutase family. It depends on Mn(2+) as a cofactor.

It is found in the plastid. The protein localises to the chloroplast. It catalyses the reaction (2R)-2-phosphoglycerate = (2R)-3-phosphoglycerate. Its pathway is carbohydrate degradation; glycolysis; pyruvate from D-glyceraldehyde 3-phosphate: step 3/5. Its function is as follows. Catalyzes the interconversion of 2-phosphoglycerate and 3-phosphoglycerate. The polypeptide is 2,3-bisphosphoglycerate-independent phosphoglycerate mutase (Pyropia yezoensis (Susabi-nori)).